Here is a 154-residue protein sequence, read N- to C-terminus: Small ribosomal subunit protein uS9 (154 aa).

A disordered region spans residues 133–154; sequence RAKESKKYGLKKARKAPQYSKR. Residues 140 to 154 are compositionally biased toward basic residues; the sequence is YGLKKARKAPQYSKR.

Belongs to the universal ribosomal protein uS9 family.

This is Small ribosomal subunit protein uS9 from Salinispora tropica (strain ATCC BAA-916 / DSM 44818 / JCM 13857 / NBRC 105044 / CNB-440).